Reading from the N-terminus, the 155-residue chain is Arginine repressor (155 aa).

It belongs to the ArgR family.

The protein resides in the cytoplasm. Its pathway is amino-acid biosynthesis; L-arginine biosynthesis [regulation]. In terms of biological role, regulates arginine biosynthesis genes. The chain is Arginine repressor from Histophilus somni (strain 2336) (Haemophilus somnus).